The following is a 524-amino-acid chain: Cytochrome P450 monooxygenase alt1 (524 aa).

The helical transmembrane segment at 24-44 (IANMLSVIAFSICISPIVYFL) threads the bilayer. C469 is a heme binding site.

Belongs to the cytochrome P450 family. Heme is required as a cofactor.

It localises to the membrane. It functions in the pathway secondary metabolite biosynthesis. Cytochrome P450 monooxygenase; part of the gene cluster that mediates the biosynthesis of alternapyrone derivatives. Alternapyrone is a decaketide with octa-methylation from methionine on every C2 unit except the third unit. All the domains in the polyketide synthase alt5 are apparently involved in alternapyrone synthesis, that is, the 8 CMeT, 7 KR, 7 DH, and 4 ER reactions in the 9 KS-mediated condensation steps required for alternapyrone synthesis. the alternapyrone produced by alt5 might be intensively modified by cytochrome P450 monooxygenases alt1, alt2 and alt3 and FAD-dependent oxidoreductase alt4 present in the alt gene cluster. The chain is Cytochrome P450 monooxygenase alt1 from Alternaria solani.